The following is a 228-amino-acid chain: Aspartyl protease inhibitor (228 aa).

An N-terminal signal peptide occupies residues Met1–Ala15. The span at Lys88–Pro112 shows a compositional bias: basic and acidic residues. The interval Lys88–Ser119 is disordered. The cysteines at positions 134 and 224 are disulfide-linked.

This sequence belongs to the protease inhibitor I33 family.

The protein resides in the secreted. In terms of biological role, aspartyl protease inhibitor. The polypeptide is Aspartyl protease inhibitor (Trichostrongylus colubriformis (Black scour worm)).